A 176-amino-acid chain; its full sequence is Ribosome maturation factor RimM (176 aa).

Residues 97 to 176 form the PRC barrel domain; the sequence is EDDFYWRDLI…QICVDWDPGF (80 aa).

This sequence belongs to the RimM family. In terms of assembly, binds ribosomal protein uS19.

Its subcellular location is the cytoplasm. In terms of biological role, an accessory protein needed during the final step in the assembly of 30S ribosomal subunit, possibly for assembly of the head region. Essential for efficient processing of 16S rRNA. May be needed both before and after RbfA during the maturation of 16S rRNA. It has affinity for free ribosomal 30S subunits but not for 70S ribosomes. The sequence is that of Ribosome maturation factor RimM from Colwellia psychrerythraea (strain 34H / ATCC BAA-681) (Vibrio psychroerythus).